Consider the following 504-residue polypeptide: Malonyl-CoA decarboxylase, mitochondrial (504 aa).

A mitochondrion-targeting transit peptide spans 1–50 (MRGLRRGLSRLGPRLGPWAVPRSLRRVLRAAGPWRGQSSAGSVSERGGAS). The tract at residues 51–201 (MEEVLSRSVP…VLKNMLSEWF (151 aa)) is alpha-helical domain. The tract at residues 202–504 (STGFLNLERV…VSQFQQNSKL (303 aa)) is catalytic domain. Catalysis depends on serine 340, which acts as the Proton acceptor. Histidine 434 serves as the catalytic Proton donor. A Microbody targeting signal motif is present at residues 502–504 (SKL).

Its subcellular location is the mitochondrion. The protein resides in the cytoplasm. It localises to the peroxisome. The enzyme catalyses malonyl-CoA + H(+) = acetyl-CoA + CO2. Its pathway is metabolic intermediate biosynthesis; acetyl-CoA biosynthesis; acetyl-CoA from malonyl-CoA: step 1/1. Its function is as follows. Catalyzes the conversion of malonyl-CoA to acetyl-CoA. In the fatty acid biosynthesis MCD selectively removes malonyl-CoA and thus assures that methyl-malonyl-CoA is the only chain elongating substrate for fatty acid synthase and that fatty acids with multiple methyl side chains are produced. This Anser anser anser (Western greylag goose) protein is Malonyl-CoA decarboxylase, mitochondrial (MLYCD).